The chain runs to 114 residues: Iron-sulfur cluster insertion protein ErpA (114 aa).

The iron-sulfur cluster site is built by Cys-42, Cys-106, and Cys-108.

It belongs to the HesB/IscA family. As to quaternary structure, homodimer. It depends on iron-sulfur cluster as a cofactor.

Its function is as follows. Required for insertion of 4Fe-4S clusters for at least IspG. The sequence is that of Iron-sulfur cluster insertion protein ErpA from Haemophilus influenzae (strain PittGG).